A 1433-amino-acid chain; its full sequence is CAP-Gly domain-containing linker protein 1 (1433 aa).

The interval 1–51 is disordered; the sequence is MSMLKPSGLKAPSKTIKHGSTLLKAPASVATAPAEKAPSSEKSSSTTTADA. Low complexity predominate over residues 32–49; sequence APAEKAPSSEKSSSTTTA. Residues 79 to 121 form the CAP-Gly 1 domain; that stretch reads GETQFAPGQWAGIVLDEPIGKNDGSVAGVRYFQCEPLRGIFTR. The segment at 133–208 is disordered; that stretch reads DEANGTQTAH…VSNLSEAGSL (76 aa). The segment covering 140-168 has biased composition (low complexity); the sequence is TAHASRATSPTSTSTASAVSASPAALLPS. Residues 184-204 show a composition bias toward polar residues; it reads TPSQFSNLSKTASGSVSNLSE. Residues 235-277 form the CAP-Gly 2 domain; it reads GETDFAKGEWCGVELDEPLGKNDGAVAGTRYFQCQPRYGLFAP. Over residues 319 to 333 the composition is skewed to low complexity; it reads SLSSVASSVSSKPSR. A disordered region spans residues 319–338; it reads SLSSVASSVSSKPSRTGLLT. A coiled-coil region spans residues 351–1353; the sequence is TTALQEALKE…CEAALNGNEE (1003 aa). The CCHC-type zinc finger occupies 1412 to 1429; that stretch reads PYCDTCEMFGHWTADCND.

The protein localises to the cytoplasm. Its subcellular location is the cytoskeleton. It is found in the cytoplasmic vesicle membrane. It localises to the cell projection. The protein resides in the ruffle. Its function is as follows. Binds to the plus end of microtubules and regulates the dynamics of the microtubule cytoskeleton. Promotes microtubule growth and microtubule bundling. Links cytoplasmic vesicles to microtubules and thereby plays an important role in intracellular vesicle trafficking. Plays a role macropinocytosis and endosome trafficking. The chain is CAP-Gly domain-containing linker protein 1 (CLIP1) from Gallus gallus (Chicken).